A 347-amino-acid polypeptide reads, in one-letter code: NADH-ubiquinone oxidoreductase chain 2 (347 aa).

9 helical membrane passes run 3-23 (PLAL…TMMS), 59-79 (YFMT…INLM), 93-115 (VASN…HFWV), 150-170 (NTNL…WGGL), 178-198 (ILAY…PFNP), 199-219 (TLTL…FMIL), 242-262 (IMLM…GFMP), 274-294 (NSII…YFYM), and 326-346 (LPTL…ISML).

This sequence belongs to the complex I subunit 2 family. Core subunit of respiratory chain NADH dehydrogenase (Complex I) which is composed of 45 different subunits. Interacts with TMEM242.

It localises to the mitochondrion inner membrane. The catalysed reaction is a ubiquinone + NADH + 5 H(+)(in) = a ubiquinol + NAD(+) + 4 H(+)(out). Functionally, core subunit of the mitochondrial membrane respiratory chain NADH dehydrogenase (Complex I) which catalyzes electron transfer from NADH through the respiratory chain, using ubiquinone as an electron acceptor. Essential for the catalytic activity and assembly of complex I. The sequence is that of NADH-ubiquinone oxidoreductase chain 2 from Loxodonta africana (African elephant).